We begin with the raw amino-acid sequence, 74 residues long: Exodeoxyribonuclease 7 small subunit (74 aa).

It belongs to the XseB family. As to quaternary structure, heterooligomer composed of large and small subunits.

The protein localises to the cytoplasm. It catalyses the reaction Exonucleolytic cleavage in either 5'- to 3'- or 3'- to 5'-direction to yield nucleoside 5'-phosphates.. Bidirectionally degrades single-stranded DNA into large acid-insoluble oligonucleotides, which are then degraded further into small acid-soluble oligonucleotides. In Bdellovibrio bacteriovorus (strain ATCC 15356 / DSM 50701 / NCIMB 9529 / HD100), this protein is Exodeoxyribonuclease 7 small subunit.